A 415-amino-acid chain; its full sequence is Multifunctional CCA protein (415 aa).

Residues Gly8 and Arg11 each contribute to the ATP site. Gly8 and Arg11 together coordinate CTP. Mg(2+) is bound by residues Asp21 and Asp23. ATP contacts are provided by Arg91, Arg143, and Arg146. The CTP site is built by Arg91, Arg143, and Arg146. Residues 232-333 (TGVHVMMVID…VRLLERCDAL (102 aa)) enclose the HD domain.

This sequence belongs to the tRNA nucleotidyltransferase/poly(A) polymerase family. Bacterial CCA-adding enzyme type 1 subfamily. Monomer. Can also form homodimers and oligomers. Mg(2+) serves as cofactor. The cofactor is Ni(2+).

The enzyme catalyses a tRNA precursor + 2 CTP + ATP = a tRNA with a 3' CCA end + 3 diphosphate. The catalysed reaction is a tRNA with a 3' CCA end + 2 CTP + ATP = a tRNA with a 3' CCACCA end + 3 diphosphate. Functionally, catalyzes the addition and repair of the essential 3'-terminal CCA sequence in tRNAs without using a nucleic acid template. Adds these three nucleotides in the order of C, C, and A to the tRNA nucleotide-73, using CTP and ATP as substrates and producing inorganic pyrophosphate. tRNA 3'-terminal CCA addition is required both for tRNA processing and repair. Also involved in tRNA surveillance by mediating tandem CCA addition to generate a CCACCA at the 3' terminus of unstable tRNAs. While stable tRNAs receive only 3'-terminal CCA, unstable tRNAs are marked with CCACCA and rapidly degraded. The chain is Multifunctional CCA protein from Cupriavidus taiwanensis (strain DSM 17343 / BCRC 17206 / CCUG 44338 / CIP 107171 / LMG 19424 / R1) (Ralstonia taiwanensis (strain LMG 19424)).